Reading from the N-terminus, the 616-residue chain is Tumor necrosis factor receptor superfamily member 11A (616 aa).

Positions 1–29 (MAPRARRRRPLFALLLLCALLARLQVALQ) are cleaved as a signal peptide. Over 30–212 (IAPPCTSEKH…PPNEPHVYLP (183 aa)) the chain is Extracellular. 9 disulfide bridges follow: C34–C46, C47–C60, C50–C68, C71–C86, C92–C112, C114–C127, C124–C126, C133–C151, and C154–C169. 4 TNFR-Cys repeats span residues 34-68 (CTSEKHYEHLGRCCNKCEPGKYMSSKCTTTSDSVC), 71-112 (CGPD…PRRC), 114-151 (CTAGYHWSQDCECCRRNTECAPGLGAQHPLQLNKDTVC), and 154-194 (CLAG…DAVC). N105 is a glycosylation site (N-linked (GlcNAc...) asparagine). Residues C133, A134, and S160 each coordinate Na(+). N-linked (GlcNAc...) asparagine glycosylation occurs at N174. Residues C175 and C194 are joined by a disulfide bond. A helical transmembrane segment spans residues 213–233 (GLIILLLFASVALVAAIIFGV). Residues 234–616 (CYRKKGKALT…PVQEQGGAKA (383 aa)) lie on the Cytoplasmic side of the membrane. The tract at residues 468 to 536 (PLPQCAYGMG…GNSNSTFISS (69 aa)) is disordered. Positions 483-493 (EASRTEARDQP) are enriched in basic and acidic residues. Positions 499-508 (GRLPSSARAG) are enriched in low complexity. Residues 524-536 (NVTGNSNSTFISS) are compositionally biased toward polar residues. The required for interaction with EEIG1 and osteoclast differentiation stretch occupies residues 544–549 (GDIIVV). The disordered stretch occupies residues 556–616 (QEGAAAAAEP…PVQEQGGAKA (61 aa)). The segment covering 570-580 (VQEETLARRDS) has biased composition (basic and acidic residues). Residue S580 is modified to Phosphoserine.

Binds to the clefts between the subunits of the TNFSF11 ligand trimer to form a heterohexamer. Part of a complex composed of EEIG1, TNFRSF11A/RANK, PLCG2, GAB2, TEC and BTK; complex formation increases in the presence of TNFSF11/RANKL. Interacts with TRAF1, TRAF2, TRAF3, TRAF5 and TRAF6. Interacts (via cytoplasmic domain) with GAB2. Interacts (via cytoplasmic domain); with EEIG1 (via N-terminus); when in the presence of TNFSF11/RANKL. As to expression, ubiquitous expression with high levels in skeletal muscle, thymus, liver, colon, small intestine and adrenal gland.

Its subcellular location is the cell membrane. It is found in the membrane raft. Functionally, receptor for TNFSF11/RANKL/TRANCE/OPGL; essential for RANKL-mediated osteoclastogenesis. Its interaction with EEIG1 promotes osteoclastogenesis via facilitating the transcription of NFATC1 and activation of PLCG2. Involved in the regulation of interactions between T-cells and dendritic cells. The protein is Tumor necrosis factor receptor superfamily member 11A (TNFRSF11A) of Homo sapiens (Human).